The chain runs to 322 residues: Phosphatidylserine decarboxylase proenzyme (322 aa).

Active-site charge relay system; for autoendoproteolytic cleavage activity residues include Asp-90, His-147, and Ser-254. Ser-254 acts as the Schiff-base intermediate with substrate; via pyruvic acid; for decarboxylase activity in catalysis. Residue Ser-254 is modified to Pyruvic acid (Ser); by autocatalysis. The interval 294 to 322 (EAEPAPLPEEEINAEHDASPLVDDKKDES) is disordered. Over residues 306–322 (NAEHDASPLVDDKKDES) the composition is skewed to basic and acidic residues.

Belongs to the phosphatidylserine decarboxylase family. PSD-B subfamily. Prokaryotic type I sub-subfamily. Heterodimer of a large membrane-associated beta subunit and a small pyruvoyl-containing alpha subunit. Pyruvate is required as a cofactor. Post-translationally, is synthesized initially as an inactive proenzyme. Formation of the active enzyme involves a self-maturation process in which the active site pyruvoyl group is generated from an internal serine residue via an autocatalytic post-translational modification. Two non-identical subunits are generated from the proenzyme in this reaction, and the pyruvate is formed at the N-terminus of the alpha chain, which is derived from the carboxyl end of the proenzyme. The autoendoproteolytic cleavage occurs by a canonical serine protease mechanism, in which the side chain hydroxyl group of the serine supplies its oxygen atom to form the C-terminus of the beta chain, while the remainder of the serine residue undergoes an oxidative deamination to produce ammonia and the pyruvoyl prosthetic group on the alpha chain. During this reaction, the Ser that is part of the protease active site of the proenzyme becomes the pyruvoyl prosthetic group, which constitutes an essential element of the active site of the mature decarboxylase.

The protein localises to the cell membrane. The enzyme catalyses a 1,2-diacyl-sn-glycero-3-phospho-L-serine + H(+) = a 1,2-diacyl-sn-glycero-3-phosphoethanolamine + CO2. It participates in phospholipid metabolism; phosphatidylethanolamine biosynthesis; phosphatidylethanolamine from CDP-diacylglycerol: step 2/2. Functionally, catalyzes the formation of phosphatidylethanolamine (PtdEtn) from phosphatidylserine (PtdSer). This Citrobacter koseri (strain ATCC BAA-895 / CDC 4225-83 / SGSC4696) protein is Phosphatidylserine decarboxylase proenzyme.